Reading from the N-terminus, the 59-residue chain is UPF0434 protein Sputw3181_2540 (59 aa).

It belongs to the UPF0434 family.

The chain is UPF0434 protein Sputw3181_2540 from Shewanella sp. (strain W3-18-1).